We begin with the raw amino-acid sequence, 148 residues long: ATP synthase epsilon chain (148 aa).

This sequence belongs to the ATPase epsilon chain family. In terms of assembly, F-type ATPases have 2 components, CF(1) - the catalytic core - and CF(0) - the membrane proton channel. CF(1) has five subunits: alpha(3), beta(3), gamma(1), delta(1), epsilon(1). CF(0) has three main subunits: a, b and c.

Its subcellular location is the cell membrane. In terms of biological role, produces ATP from ADP in the presence of a proton gradient across the membrane. In Streptococcus thermophilus (strain ATCC BAA-250 / LMG 18311), this protein is ATP synthase epsilon chain.